Reading from the N-terminus, the 495-residue chain is Germacrene A acid 8-beta-hydroxylase (495 aa).

The helical; Signal-anchor for type II membrane protein transmembrane segment at Pro3–Val23 threads the bilayer. Asn103 carries an N-linked (GlcNAc...) asparagine glycan. Heme is bound at residue Cys433.

It belongs to the cytochrome P450 family. It depends on heme as a cofactor. As to expression, mostly expressed in leaves and flowers, and, to a lower extent, in roots and stems.

It localises to the membrane. The catalysed reaction is germacra-1(10),4,11(13)-trien-12-oate + reduced [NADPH--hemoprotein reductase] + O2 = 8beta-hydroxygermacra-1(10),4,11(13)-trien-12-oate + oxidized [NADPH--hemoprotein reductase] + H2O + H(+). It catalyses the reaction germacra-1(10),4,11(13)-trien-12-oate + reduced [NADPH--hemoprotein reductase] + O2 = 8-epi-inunolide + oxidized [NADPH--hemoprotein reductase] + 2 H2O. The enzyme catalyses germacra-1(10),4,11(13)-trien-12-oate + reduced [NADPH--hemoprotein reductase] + O2 = 8alpha-hydroxygermacra-1(10),4,11(13)-trien-12-oate + oxidized [NADPH--hemoprotein reductase] + H2O + H(+). It functions in the pathway secondary metabolite biosynthesis; terpenoid biosynthesis. In terms of biological role, involved in the biosynthesis of germacrene-derived sesquiterpene lactones. Hydroxylates germacrene A acid to 8-beta-hydroxy-germacrene A and 8-alpha-hydroxy-germacrene A acids. Unlike 8-alpha-hydroxy-germacrene A acid with is spontaneously converted into inunolide (12, 8-alpha), 8-beta-hydroxy-germacrene A cannot undergo spontaneous lactonization. This Inula hupehensis (Inula helianthus-aquatilis subsp. hupehensis) protein is Germacrene A acid 8-beta-hydroxylase.